A 580-amino-acid polypeptide reads, in one-letter code: mRNA cap guanine-N(7) methyltransferase (580 aa).

Polar residues-rich tracts occupy residues 1 to 17 (MSGSKQGSEKASITSLI) and 25 to 53 (EATSVSTQNQSPKTQITQTENVEVQNSDL). A disordered region spans residues 1–222 (MSGSKQGSEK…PVEAQPYSRL (222 aa)). Over residues 54 to 67 (KVTENKPKNTEMKP) the composition is skewed to basic and acidic residues. The span at 69–90 (DPNTNASTTENTPITTSNAQVS) shows a compositional bias: polar residues. Over residues 102–154 (REPEEAQNRYDRYVPRVDNRRRGEPRVAEVRQDPRYAKYLRQDQEERRIRRPD) the composition is skewed to basic and acidic residues. The span at 191 to 214 (ESEENGDEQQGDDEEETPGNEEPV) shows a compositional bias: acidic residues. Residues 271 to 579 (SPIYKLRNFN…FYLGFAFEKL (309 aa)) form the mRNA cap 0 methyltransferase domain. 280 to 281 (NN) is an mRNA binding site. Residues Lys284, Cys308, Asp330, Asp376, Gln406, and Tyr411 each contribute to the S-adenosyl-L-methionine site.

It belongs to the class I-like SAM-binding methyltransferase superfamily. mRNA cap 0 methyltransferase family.

It localises to the nucleus. It carries out the reaction a 5'-end (5'-triphosphoguanosine)-ribonucleoside in mRNA + S-adenosyl-L-methionine = a 5'-end (N(7)-methyl 5'-triphosphoguanosine)-ribonucleoside in mRNA + S-adenosyl-L-homocysteine. Its function is as follows. Responsible for methylating the 5'-cap structure of mRNAs. The protein is mRNA cap guanine-N(7) methyltransferase (ABD1) of Meyerozyma guilliermondii (strain ATCC 6260 / CBS 566 / DSM 6381 / JCM 1539 / NBRC 10279 / NRRL Y-324) (Yeast).